Reading from the N-terminus, the 86-residue chain is Large ribosomal subunit protein bL35m (86 aa).

Residues 1-18 constitute a mitochondrion transit peptide; that stretch reads MLVVFQRVVRATVLVGRK. A disordered region spans residues 45–69; sequence RKHAGAQHLNRDTSSSTRARQRQWE.

Belongs to the bacterial ribosomal protein bL35 family. In terms of assembly, component of the mitochondrial large ribosomal subunit (mt-LSU). Mature yeast 74S mitochondrial ribosomes consist of a small (37S) and a large (54S) subunit. The 37S small subunit contains a 15S ribosomal RNA (15S mt-rRNA) and at least 32 different proteins. The 54S large subunit contains a 21S rRNA (21S mt-rRNA) and at least 45 different proteins.

Its subcellular location is the mitochondrion. Functionally, component of the mitochondrial ribosome (mitoribosome), a dedicated translation machinery responsible for the synthesis of mitochondrial genome-encoded proteins, including at least some of the essential transmembrane subunits of the mitochondrial respiratory chain. The mitoribosomes are attached to the mitochondrial inner membrane and translation products are cotranslationally integrated into the membrane. The chain is Large ribosomal subunit protein bL35m (new15) from Schizosaccharomyces pombe (strain 972 / ATCC 24843) (Fission yeast).